Consider the following 414-residue polypeptide: Serine/threonine transporter SstT (414 aa).

8 consecutive transmembrane segments (helical) span residues Gly-16–Ser-36, Leu-46–Val-66, Ile-84–Phe-104, Ala-143–Leu-163, Ala-180–Val-200, Leu-219–Phe-239, Met-300–Val-320, and Val-332–Ile-352.

Belongs to the dicarboxylate/amino acid:cation symporter (DAACS) (TC 2.A.23) family.

The protein resides in the cell inner membrane. It catalyses the reaction L-serine(in) + Na(+)(in) = L-serine(out) + Na(+)(out). The enzyme catalyses L-threonine(in) + Na(+)(in) = L-threonine(out) + Na(+)(out). Its function is as follows. Involved in the import of serine and threonine into the cell, with the concomitant import of sodium (symport system). The protein is Serine/threonine transporter SstT of Salmonella arizonae (strain ATCC BAA-731 / CDC346-86 / RSK2980).